The following is a 170-amino-acid chain: Large ribosomal subunit protein uL10 (170 aa).

It belongs to the universal ribosomal protein uL10 family. In terms of assembly, part of the ribosomal stalk of the 50S ribosomal subunit. The N-terminus interacts with L11 and the large rRNA to form the base of the stalk. The C-terminus forms an elongated spine to which L12 dimers bind in a sequential fashion forming a multimeric L10(L12)X complex.

Functionally, forms part of the ribosomal stalk, playing a central role in the interaction of the ribosome with GTP-bound translation factors. The chain is Large ribosomal subunit protein uL10 from Chlamydia felis (strain Fe/C-56) (Chlamydophila felis).